We begin with the raw amino-acid sequence, 554 residues long: CTP synthase (554 aa).

Residues 1 to 270 are amidoligase domain; sequence MTKFVFVTGG…DRIICEELRI (270 aa). Serine 13 contacts CTP. Serine 13 contributes to the UTP binding site. Residues 14–19 and aspartate 71 contribute to the ATP site; that span reads SLGKGI. Residues aspartate 71 and glutamate 144 each coordinate Mg(2+). Residues 151 to 153, 191 to 196, and lysine 227 contribute to the CTP site; these read DIE and KTKPTQ. UTP is bound by residues 191-196 and lysine 227; that span reads KTKPTQ. A Glutamine amidotransferase type-1 domain is found at 295 to 547; sequence TIGMVGKYVD…VEAALAHRQR (253 aa). Glycine 356 is an L-glutamine binding site. Residue cysteine 383 is the Nucleophile; for glutamine hydrolysis of the active site. L-glutamine-binding positions include 384–387, glutamate 407, and arginine 473; that span reads LGMQ. Active-site residues include histidine 520 and glutamate 522.

Belongs to the CTP synthase family. Homotetramer.

The enzyme catalyses UTP + L-glutamine + ATP + H2O = CTP + L-glutamate + ADP + phosphate + 2 H(+). It catalyses the reaction L-glutamine + H2O = L-glutamate + NH4(+). The catalysed reaction is UTP + NH4(+) + ATP = CTP + ADP + phosphate + 2 H(+). Its pathway is pyrimidine metabolism; CTP biosynthesis via de novo pathway; CTP from UDP: step 2/2. Allosterically activated by GTP, when glutamine is the substrate; GTP has no effect on the reaction when ammonia is the substrate. The allosteric effector GTP functions by stabilizing the protein conformation that binds the tetrahedral intermediate(s) formed during glutamine hydrolysis. Inhibited by the product CTP, via allosteric rather than competitive inhibition. Catalyzes the ATP-dependent amination of UTP to CTP with either L-glutamine or ammonia as the source of nitrogen. Regulates intracellular CTP levels through interactions with the four ribonucleotide triphosphates. The sequence is that of CTP synthase from Ralstonia nicotianae (strain ATCC BAA-1114 / GMI1000) (Ralstonia solanacearum).